Reading from the N-terminus, the 359-residue chain is 3-dehydroquinate synthase (359 aa).

NAD(+)-binding positions include 71-76, 105-109, 129-130, Lys-142, and Lys-151; these read DAEAAK, GAVTD, and TT. The Zn(2+) site is built by Glu-184, His-247, and His-263.

It belongs to the sugar phosphate cyclases superfamily. Dehydroquinate synthase family. Requires NAD(+) as cofactor. The cofactor is Co(2+). Zn(2+) is required as a cofactor.

The protein localises to the cytoplasm. It catalyses the reaction 7-phospho-2-dehydro-3-deoxy-D-arabino-heptonate = 3-dehydroquinate + phosphate. It functions in the pathway metabolic intermediate biosynthesis; chorismate biosynthesis; chorismate from D-erythrose 4-phosphate and phosphoenolpyruvate: step 2/7. Catalyzes the conversion of 3-deoxy-D-arabino-heptulosonate 7-phosphate (DAHP) to dehydroquinate (DHQ). This Leifsonia xyli subsp. xyli (strain CTCB07) protein is 3-dehydroquinate synthase.